An 87-amino-acid polypeptide reads, in one-letter code: Antitoxin RelB1 (87 aa).

In terms of biological role, antitoxin component of a type II toxin-antitoxin (TA) system. Neutralizes the effect of cognate toxin RelE1, but no other RelE or ParE toxin. The protein is Antitoxin RelB1 (relB1) of Caulobacter vibrioides (strain ATCC 19089 / CIP 103742 / CB 15) (Caulobacter crescentus).